The sequence spans 215 residues: Probable transaldolase (215 aa).

K83 serves as the catalytic Schiff-base intermediate with substrate.

Belongs to the transaldolase family. Type 3B subfamily.

Its subcellular location is the cytoplasm. The enzyme catalyses D-sedoheptulose 7-phosphate + D-glyceraldehyde 3-phosphate = D-erythrose 4-phosphate + beta-D-fructose 6-phosphate. Its pathway is carbohydrate degradation; pentose phosphate pathway; D-glyceraldehyde 3-phosphate and beta-D-fructose 6-phosphate from D-ribose 5-phosphate and D-xylulose 5-phosphate (non-oxidative stage): step 2/3. Functionally, transaldolase is important for the balance of metabolites in the pentose-phosphate pathway. In Bdellovibrio bacteriovorus (strain ATCC 15356 / DSM 50701 / NCIMB 9529 / HD100), this protein is Probable transaldolase.